We begin with the raw amino-acid sequence, 321 residues long: tRNA U34 carboxymethyltransferase (321 aa).

Residues K90, W104, K109, G129, 151–153 (DPT), 180–181 (IE), M195, Y199, and R314 each bind carboxy-S-adenosyl-L-methionine.

It belongs to the class I-like SAM-binding methyltransferase superfamily. CmoB family. In terms of assembly, homotetramer.

It carries out the reaction carboxy-S-adenosyl-L-methionine + 5-hydroxyuridine(34) in tRNA = 5-carboxymethoxyuridine(34) in tRNA + S-adenosyl-L-homocysteine + H(+). Catalyzes carboxymethyl transfer from carboxy-S-adenosyl-L-methionine (Cx-SAM) to 5-hydroxyuridine (ho5U) to form 5-carboxymethoxyuridine (cmo5U) at position 34 in tRNAs. This is tRNA U34 carboxymethyltransferase from Haemophilus influenzae (strain ATCC 51907 / DSM 11121 / KW20 / Rd).